Consider the following 237-residue polypeptide: Phosphoribosylaminoimidazole-succinocarboxamide synthase (237 aa).

Belongs to the SAICAR synthetase family.

The enzyme catalyses 5-amino-1-(5-phospho-D-ribosyl)imidazole-4-carboxylate + L-aspartate + ATP = (2S)-2-[5-amino-1-(5-phospho-beta-D-ribosyl)imidazole-4-carboxamido]succinate + ADP + phosphate + 2 H(+). The protein operates within purine metabolism; IMP biosynthesis via de novo pathway; 5-amino-1-(5-phospho-D-ribosyl)imidazole-4-carboxamide from 5-amino-1-(5-phospho-D-ribosyl)imidazole-4-carboxylate: step 1/2. The sequence is that of Phosphoribosylaminoimidazole-succinocarboxamide synthase from Deinococcus radiodurans (strain ATCC 13939 / DSM 20539 / JCM 16871 / CCUG 27074 / LMG 4051 / NBRC 15346 / NCIMB 9279 / VKM B-1422 / R1).